The following is a 192-amino-acid chain: Cytidylate kinase (192 aa).

Residue 12 to 20 (GLAGSGTTT) participates in ATP binding.

The protein belongs to the cytidylate kinase family. Type 2 subfamily.

The protein resides in the cytoplasm. The enzyme catalyses CMP + ATP = CDP + ADP. It carries out the reaction dCMP + ATP = dCDP + ADP. This chain is Cytidylate kinase (cmk), found in Pyrococcus horikoshii (strain ATCC 700860 / DSM 12428 / JCM 9974 / NBRC 100139 / OT-3).